The following is a 581-amino-acid chain: MVLKVFFPTCCASADSGLLVGRWVPGQSSAVILAVVHFPFIPIQVKELLAQVQKASQVPVAVLGTWCHRQQEPQESLGNFLEGLGTIFSHDPWLQLCRERGTRLWSCKATYPQMSNPLDMHPEEQVMLIFYDQRKLLLSWLHPPPVLPACQMGDTTASTGGLADIFDTVARSEVLFRNDQFDERPVRLSHWQSEGVEASILVELAKRASGPVCLLLASLLSLISAASACRLWKLWPLSFIRSKLSTCEQLHHRLKHLSFIFSTEKAQNPMQLMRKANMLVSVLLDVALGLLLLSWLHSNNRIGQLANALVPVADRVAEELQHLLQWLMGAPAGLKMNRALDQVLGRFFLYHIHLWISYIHLMSPFIEHILWHVGLSACLGLTVALSIFSDIIALLTFHIYCFYVYGARLYCLKIYGLSSLWRLFRGKKWNVLRQRVDSCSYDLDQLFIGTLLFTILVFLLPTTALYYLVFTLLRLLVITVQGLIHLLVDLINSLPLYSLGLRLCRPYRLAAGVKFRVLEKEAGRPLRLLMQINPLSYNHVMHIYRLPRCGCHPKHSWGTLCRKLVFGELIYPWRQREDKQD.

The next 5 membrane-spanning stretches (helical) occupy residues 276-298 (ANML…WLHS), 344-366 (LGRF…SPFI), 381-403 (LTVA…YCFY), 446-468 (LFIG…LYYL), and 478-500 (ITVQ…YSLG).

Belongs to the PIGQ family. In terms of assembly, component of the glycosylphosphatidylinositol-N-acetylglucosaminyltransferase (GPI-GnT) complex composed at least by PIGA, PIGC, PIGH, PIGP, PIGQ, PIGY and DPM2. Interacts with PIGA, PIGH and PIGC.

The protein resides in the membrane. The protein operates within glycolipid biosynthesis; glycosylphosphatidylinositol-anchor biosynthesis. In terms of biological role, part of the glycosylphosphatidylinositol-N-acetylglucosaminyltransferase (GPI-GnT) complex that catalyzes the transfer of N-acetylglucosamine from UDP-N-acetylglucosamine to phosphatidylinositol and participates in the first step of GPI biosynthesis. The polypeptide is Phosphatidylinositol N-acetylglucosaminyltransferase subunit Q (Mus musculus (Mouse)).